The chain runs to 264 residues: 5'-nucleotidase SurE (264 aa).

Residues Asp10, Asp11, Ser43, and Asn97 each contribute to the a divalent metal cation site.

Belongs to the SurE nucleotidase family. A divalent metal cation is required as a cofactor.

The protein resides in the cytoplasm. It catalyses the reaction a ribonucleoside 5'-phosphate + H2O = a ribonucleoside + phosphate. Its function is as follows. Nucleotidase that shows phosphatase activity on nucleoside 5'-monophosphates. This is 5'-nucleotidase SurE from Sulfurimonas denitrificans (strain ATCC 33889 / DSM 1251) (Thiomicrospira denitrificans (strain ATCC 33889 / DSM 1251)).